Reading from the N-terminus, the 183-residue chain is MAELATIARPYAEALFKATTGAGVDPVSAAAWLDELAAIADRPELRQLAGNPKVTADQVFALFTQVLKDAARAALPEMAGNFLRTVIANGRINVLTQVAQQFRALLNRRNGFSDAVVYSAFPMDSAALSEVGAALQKRFGRKLNLAVQQDPSLIGGIRVVVGDEVLDSSVKARLEQMKAALTA.

Belongs to the ATPase delta chain family. In terms of assembly, F-type ATPases have 2 components, F(1) - the catalytic core - and F(0) - the membrane proton channel. F(1) has five subunits: alpha(3), beta(3), gamma(1), delta(1), epsilon(1). F(0) has three main subunits: a(1), b(2) and c(10-14). The alpha and beta chains form an alternating ring which encloses part of the gamma chain. F(1) is attached to F(0) by a central stalk formed by the gamma and epsilon chains, while a peripheral stalk is formed by the delta and b chains.

It is found in the cell inner membrane. In terms of biological role, f(1)F(0) ATP synthase produces ATP from ADP in the presence of a proton or sodium gradient. F-type ATPases consist of two structural domains, F(1) containing the extramembraneous catalytic core and F(0) containing the membrane proton channel, linked together by a central stalk and a peripheral stalk. During catalysis, ATP synthesis in the catalytic domain of F(1) is coupled via a rotary mechanism of the central stalk subunits to proton translocation. Functionally, this protein is part of the stalk that links CF(0) to CF(1). It either transmits conformational changes from CF(0) to CF(1) or is implicated in proton conduction. The polypeptide is ATP synthase subunit delta (Verminephrobacter eiseniae (strain EF01-2)).